Consider the following 1115-residue polypeptide: Phytochrome E (1115 aa).

The 171-residue stretch at 213–383 folds into the GAF domain; the sequence is DIGTLCDTVV…AFSLQLYMEL (171 aa). Cys-318 contributes to the phytochromobilin binding site. The PAS 1 domain occupies 598-669; the sequence is MALELVRLVE…ALMCRALQGE (72 aa). The PAC domain maps to 672–728; that stretch reads RNVEVKLLKFGNHPTKEVVYLVVNACTSRDYKNDIIGVCFVGQDITPEKAVMDKFVR. The 72-residue stretch at 732 to 803 folds into the PAS 2 domain; the sequence is DYEAIIQSLN…DALTKFMILL (72 aa). The 221-residue stretch at 880–1100 folds into the Histidine kinase domain; that stretch reads YIQQQMKNPL…YFLIDLDFKT (221 aa).

Belongs to the phytochrome family. Homodimer. Post-translationally, contains one covalently linked phytochromobilin chromophore.

Functionally, regulatory photoreceptor which exists in two forms that are reversibly interconvertible by light: the Pr form that absorbs maximally in the red region of the spectrum and the Pfr form that absorbs maximally in the far-red region. Photoconversion of Pr to Pfr induces an array of morphogenic responses, whereas reconversion of Pfr to Pr cancels the induction of those responses. Pfr controls the expression of a number of nuclear genes including those encoding the small subunit of ribulose-bisphosphate carboxylase, chlorophyll A/B binding protein, protochlorophyllide reductase, rRNA, etc. It also controls the expression of its own gene(s) in a negative feedback fashion. This Ipomoea nil (Japanese morning glory) protein is Phytochrome E (PHYE).